A 228-amino-acid polypeptide reads, in one-letter code: Protein ULTRAPETALA 2 (228 aa).

The region spanning 14–121 is the SAND domain; the sequence is EELQEISGVH…NKALKNSNVS (108 aa).

In terms of tissue distribution, expressed in influorescence, pollen and siliques, with a higher expression in influorescence.

It localises to the cytoplasm. Its subcellular location is the nucleus. In terms of biological role, putative transcription factor that acts as a key negative regulator of cell accumulation in shoot and floral meristems. Negatively regulates the size of the WUSCHEL (WUS)-expressing organizing center in inflorescence meristems. May act by down-regulating expression of WUS. Can compensate for mutant ULT1 protein when overexpressed. The sequence is that of Protein ULTRAPETALA 2 (ULT2) from Arabidopsis thaliana (Mouse-ear cress).